A 351-amino-acid chain; its full sequence is DNA polymerase IV (351 aa).

One can recognise a UmuC domain in the interval 4-185 (IIHVDMDCFF…LPLAKIPGVG (182 aa)). Positions 8 and 103 each coordinate Mg(2+). Glu104 is a catalytic residue.

This sequence belongs to the DNA polymerase type-Y family. In terms of assembly, monomer. It depends on Mg(2+) as a cofactor.

It is found in the cytoplasm. The enzyme catalyses DNA(n) + a 2'-deoxyribonucleoside 5'-triphosphate = DNA(n+1) + diphosphate. Poorly processive, error-prone DNA polymerase involved in untargeted mutagenesis. Copies undamaged DNA at stalled replication forks, which arise in vivo from mismatched or misaligned primer ends. These misaligned primers can be extended by PolIV. Exhibits no 3'-5' exonuclease (proofreading) activity. May be involved in translesional synthesis, in conjunction with the beta clamp from PolIII. This Escherichia coli (strain ATCC 8739 / DSM 1576 / NBRC 3972 / NCIMB 8545 / WDCM 00012 / Crooks) protein is DNA polymerase IV.